The primary structure comprises 127 residues: MKEQTEVGKLKEGKYLLVDDEPCKILSISVSKPGKHGAAKARLDVVGIFDGVKRSIVQPVSAKVYAPIVERRNAQVISIAGNVVQMMDLESFENFEVTVTDDVKDRIEAGKETMYIYSMEKRKIDFL.

A Hypusine modification is found at Lys-35.

The protein belongs to the eIF-5A family.

The protein localises to the cytoplasm. Functions by promoting the formation of the first peptide bond. The protein is Translation initiation factor 5A of Methanospirillum hungatei JF-1 (strain ATCC 27890 / DSM 864 / NBRC 100397 / JF-1).